A 248-amino-acid chain; its full sequence is Tyrosine recombinase XerD-like (248 aa).

Residues 1–72 (MIAFIEPFLA…TVNQFLYYLY (72 aa)) enclose the Core-binding (CB) domain. The region spanning 92-248 (SLKPQLTRLD…PITLEKYYKM (157 aa)) is the Tyr recombinase domain. Arg-213 is a catalytic residue. Catalysis depends on Tyr-245, which acts as the O-(3'-phospho-DNA)-tyrosine intermediate.

Belongs to the 'phage' integrase family. XerD-like subfamily.

The protein resides in the cytoplasm. Its function is as follows. Putative tyrosine recombinase. Not involved in the cutting and rejoining of the recombining DNA molecules on dif(SL) site. This chain is Tyrosine recombinase XerD-like, found in Streptococcus equi subsp. zooepidemicus (strain MGCS10565).